A 117-amino-acid chain; its full sequence is Hydrogenase maturation factor HypA (117 aa).

Residue histidine 2 coordinates Ni(2+). The Zn(2+) site is built by cysteine 74, cysteine 77, cysteine 91, and cysteine 94.

The protein belongs to the HypA/HybF family.

Functionally, involved in the maturation of [NiFe] hydrogenases. Required for nickel insertion into the metal center of the hydrogenase. The protein is Hydrogenase maturation factor HypA of Helicobacter pylori (strain J99 / ATCC 700824) (Campylobacter pylori J99).